Consider the following 344-residue polypeptide: MTQITPQEALQRTIEHREIFHDEMLHLMRLIMRGELSPVMTAAIVTGLRVKKETIGEITAAAEVMREFSNKVHVEDKRHLVDIVGTGGDGANTFNISTCSIFVIAAAGGKVSKHGGRSVSSKSGSADAMEALGVNIQLTPEQIARSIADVGIGFMFAPNHHPAMKNVAPVRKELGVRTIFNILGPLTNPASAPNILMGVFHEDLVGIQVRALQRLGAEHAIVVYGRDGLDEISLGAGTLVGELKDGVVREYEIHPEDFGLRMVGTRAFKVDNPEESKAMLLGVLHGEKSAARDIVCLNAGAALYAANVASSIEDGMARAQAALDSGAALAKLNELVAYTARLTA.

5-phospho-alpha-D-ribose 1-diphosphate is bound by residues Gly85, 88 to 89 (GD), Thr93, 95 to 98 (NIST), 113 to 121 (KHGGRSVSS), and Ser125. Anthranilate is bound at residue Gly85. Ser97 lines the Mg(2+) pocket. Anthranilate is bound at residue Arg171. Positions 230 and 231 each coordinate Mg(2+).

It belongs to the anthranilate phosphoribosyltransferase family. In terms of assembly, homodimer. It depends on Mg(2+) as a cofactor.

It catalyses the reaction N-(5-phospho-beta-D-ribosyl)anthranilate + diphosphate = 5-phospho-alpha-D-ribose 1-diphosphate + anthranilate. It participates in amino-acid biosynthesis; L-tryptophan biosynthesis; L-tryptophan from chorismate: step 2/5. Its function is as follows. Catalyzes the transfer of the phosphoribosyl group of 5-phosphorylribose-1-pyrophosphate (PRPP) to anthranilate to yield N-(5'-phosphoribosyl)-anthranilate (PRA). This chain is Anthranilate phosphoribosyltransferase, found in Delftia acidovorans (strain DSM 14801 / SPH-1).